The following is a 152-amino-acid chain: Deoxyuridine 5'-triphosphate nucleotidohydrolase (152 aa).

Substrate is bound by residues 71–73 (RSG), asparagine 84, 88–90 (LID), and methionine 98.

It belongs to the dUTPase family. It depends on Mg(2+) as a cofactor.

It carries out the reaction dUTP + H2O = dUMP + diphosphate + H(+). It functions in the pathway pyrimidine metabolism; dUMP biosynthesis; dUMP from dCTP (dUTP route): step 2/2. Its function is as follows. This enzyme is involved in nucleotide metabolism: it produces dUMP, the immediate precursor of thymidine nucleotides and it decreases the intracellular concentration of dUTP so that uracil cannot be incorporated into DNA. The protein is Deoxyuridine 5'-triphosphate nucleotidohydrolase of Shewanella halifaxensis (strain HAW-EB4).